The following is a 174-amino-acid chain: Granulocyte colony-stimulating factor (174 aa).

2 disulfide bridges follow: Cys36/Cys42 and Cys64/Cys74. An O-linked (GalNAc...) threonine glycan is attached at Thr133.

The protein belongs to the IL-6 superfamily. Monomer. In terms of processing, O-glycosylated.

It localises to the secreted. Its function is as follows. Granulocyte/macrophage colony-stimulating factors are cytokines that act in hematopoiesis by controlling the production, differentiation, and function of 2 related white cell populations of the blood, the granulocytes and the monocytes-macrophages. This CSF induces granulocytes. The protein is Granulocyte colony-stimulating factor (CSF3) of Ovis aries (Sheep).